A 318-amino-acid polypeptide reads, in one-letter code: Glutathione synthetase (318 aa).

The ATP-grasp domain occupies 128-313 (KLAILNFSRF…VAAMFADAVA (186 aa)). 154 to 210 (LKEHGDIIIKPLDGMGGMGIFRLTEKDPNIGSILETLMQLDSRTIMAQRYIPEIVHG) is a binding site for ATP. Positions 284 and 286 each coordinate Mg(2+).

This sequence belongs to the prokaryotic GSH synthase family. It depends on Mg(2+) as a cofactor. Mn(2+) serves as cofactor.

The catalysed reaction is gamma-L-glutamyl-L-cysteine + glycine + ATP = glutathione + ADP + phosphate + H(+). Its pathway is sulfur metabolism; glutathione biosynthesis; glutathione from L-cysteine and L-glutamate: step 2/2. This Neisseria meningitidis serogroup A / serotype 4A (strain DSM 15465 / Z2491) protein is Glutathione synthetase.